Here is a 374-residue protein sequence, read N- to C-terminus: MAANVSGAKSCPANFLAAADDKLSGFQGDFLWPILVVEFLVAVASNGLALYRFSIRKQRPWHPAVVFSVQLAVSDLLCALTLPPLAAYLYPPKHWRYGEAACRLERFLFTCNLLGSVIFITCISLNRYLGIVHPFFARSHLRPKHAWAVSAAGWVLAALLAMPTLSFSHLKRPQQGAGNCSVARPEACIKCLGTADHGLAAYRAYSLVLAGLGCGLPLLLTLAAYGALGRAVLRSPGMTVAEKLRVAALVASGVALYASSYVPYHIMRVLNVDARRRWSTRCPSFADIAQATAALELGPYVGYQVMRGLMPLAFCVHPLLYMAAVPSLGCCCRHCPGYRDSWNPEDAKSTGQALPLNATAAPKPSEPQSRELSQ.

At 1–29 (MAANVSGAKSCPANFLAAADDKLSGFQGD) the chain is on the extracellular side. A glycan (N-linked (GlcNAc...) asparagine) is linked at Asn-4. A helical transmembrane segment spans residues 30 to 50 (FLWPILVVEFLVAVASNGLAL). Residues 51–64 (YRFSIRKQRPWHPA) lie on the Cytoplasmic side of the membrane. Residues 65 to 85 (VVFSVQLAVSDLLCALTLPPL) form a helical membrane-spanning segment. Residues 86-116 (AAYLYPPKHWRYGEAACRLERFLFTCNLLGS) lie on the Extracellular side of the membrane. A disulfide bridge links Cys-102 with Cys-180. Residues 117–137 (VIFITCISLNRYLGIVHPFFA) traverse the membrane as a helical segment. Residues 138–146 (RSHLRPKHA) are Cytoplasmic-facing. A helical transmembrane segment spans residues 147-167 (WAVSAAGWVLAALLAMPTLSF). The Extracellular portion of the chain corresponds to 168–206 (SHLKRPQQGAGNCSVARPEACIKCLGTADHGLAAYRAYS). A glycan (N-linked (GlcNAc...) asparagine) is linked at Asn-179. Residues 207–227 (LVLAGLGCGLPLLLTLAAYGA) form a helical membrane-spanning segment. Residues 228–245 (LGRAVLRSPGMTVAEKLR) are Cytoplasmic-facing. A helical membrane pass occupies residues 246 to 266 (VAALVASGVALYASSYVPYHI). At 267–308 (MRVLNVDARRRWSTRCPSFADIAQATAALELGPYVGYQVMRG) the chain is on the extracellular side. Residues 309–329 (LMPLAFCVHPLLYMAAVPSLG) form a helical membrane-spanning segment. The Cytoplasmic segment spans residues 330–374 (CCCRHCPGYRDSWNPEDAKSTGQALPLNATAAPKPSEPQSRELSQ). Residues 345 to 374 (EDAKSTGQALPLNATAAPKPSEPQSRELSQ) form a disordered region.

The protein belongs to the G-protein coupled receptor 1 family. Highest expression in liver and spleen.

It is found in the cell membrane. In terms of biological role, receptor for ATP and ADP coupled to G-proteins that activate both phosphatidylinositol-calcium and adenylyl cyclase second messenger systems. Not activated by UTP or UDP. The chain is P2Y purinoceptor 11 (P2RY11) from Homo sapiens (Human).